The primary structure comprises 169 residues: uncharacterized protein (169 aa).

A mitochondrion-targeting transit peptide spans Met-1–Leu-91. A disordered region spans residues Pro-54–Glu-76. A compositionally biased stretch (polar residues) spans Ser-61–Asn-71.

It localises to the mitochondrion. This is an uncharacterized protein from Trypanosoma brucei brucei (strain 927/4 GUTat10.1).